A 214-amino-acid polypeptide reads, in one-letter code: Response regulator GacA (214 aa).

Positions 3–119 (KVLVVDDHDL…EMVQAIRQVF (117 aa)) constitute a Response regulatory domain. Aspartate 54 bears the 4-aspartylphosphate mark. The HTH luxR-type domain maps to 143 to 208 (HDSPFDSLSE…ELALLAVRHG (66 aa)). Residues 167 to 186 (VQSISDKLCLSPKTVNTYRY) constitute a DNA-binding region (H-T-H motif).

In terms of biological role, positively controls the production of the autoinducer N-butyryl-homoserine lactone and the formation of the virulence factors pyocyanine, cyanide, and lipase. This chain is Response regulator GacA (gacA), found in Pseudomonas aeruginosa (strain ATCC 15692 / DSM 22644 / CIP 104116 / JCM 14847 / LMG 12228 / 1C / PRS 101 / PAO1).